A 354-amino-acid chain; its full sequence is Serum paraoxonase/lactonase 3 (354 aa).

Cys-42 and Cys-352 are disulfide-bonded. The N-linked (GlcNAc...) asparagine glycan is linked to Asn-50. Residues Glu-53 and Asp-54 each coordinate Ca(2+). The Proton acceptor role is filled by His-114. Ile-116 contributes to the Ca(2+) binding site. Position 165 is a phosphoserine (Ser-165). Ca(2+) contacts are provided by Asn-167, Asp-168, Asn-223, Asp-268, and Asn-269. 2 N-linked (GlcNAc...) asparagine glycosylation sites follow: Asn-269 and Asn-323.

Belongs to the paraoxonase family. As to quaternary structure, homodimer. Ca(2+) serves as cofactor. In terms of processing, glycosylated. The signal sequence is not cleaved.

It localises to the secreted. The protein localises to the extracellular space. The enzyme catalyses a phenyl acetate + H2O = a phenol + acetate + H(+). It carries out the reaction An aryl dialkyl phosphate + H2O = dialkyl phosphate + an aryl alcohol.. The catalysed reaction is an N-acyl-L-homoserine lactone + H2O = an N-acyl-L-homoserine + H(+). Has low activity towards the organophosphate paraxon and aromatic carboxylic acid esters. Rapidly hydrolyzes lactones such as statin prodrugs (e.g. lovastatin). Hydrolyzes aromatic lactones and 5- or 6-member ring lactones with aliphatic substituents but not simple lactones or those with polar substituents. The chain is Serum paraoxonase/lactonase 3 (Pon3) from Rattus norvegicus (Rat).